We begin with the raw amino-acid sequence, 787 residues long: Integrin beta-6 (787 aa).

The first 21 residues, 1–21 (MGIELVCLFLLLLGRNDHVQG), serve as a signal peptide directing secretion. In terms of domain architecture, PSI spans 22–71 (GCAWSGAETCSDCLLTGPHCAWCSQENFTHLSGAGERCDTPENLLAKGCQ). Over 22-708 (GCAWSGAETC…KDCPKPPNIP (687 aa)) the chain is Extracellular. Cystine bridges form between C23–C41, C31–C454, C34–C59, C44–C70, C197–C204, C252–C293, C394–C406, C426–C452, C456–C476, C467–C479, C481–C490, C492–C519, C502–C517, C511–C522, C524–C537, C539–C560, C544–C558, C552–C563, and C565–C574. N48 and N97 each carry an N-linked (GlcNAc...) asparagine glycan. Positions 131-371 (YPVDLYYLMD…QLIISAYEEL (241 aa)) constitute a VWFA domain. The Mg(2+) site is built by D140, S142, and S144. The Ca(2+) site is built by S144, D147, D148, and E179. The Ca(2+) site is built by N235, D237, P239, and E240. E240 provides a ligand contact to Mg(2+). Residue N260 is glycosylated (N-linked (GlcNAc...) asparagine). The Ca(2+) site is built by D271 and K355. Residue N387 is glycosylated (N-linked (GlcNAc...) asparagine). An N-linked (GlcNAc...) asparagine glycan is attached at N418. 4 I-EGF domains span residues 456–491 (CQREVEANSSKCHHGNGSFQCGVCACNPGHMGPRCE), 492–538 (CGED…PYCQ), 539–575 (CDNFSCLRHKGLLCGDNGDCDCGECVCRDGWTGEYCN), and 576–615 (CTTSRDACASEDGVLCSGRGDCVCGKCVCRNPGASGPTCE). 2 N-linked (GlcNAc...) asparagine glycosylation sites follow: N463 and N471. The N-linked (GlcNAc...) asparagine glycan is linked to N541. Residue N575 is glycosylated (N-linked (GlcNAc...) asparagine). 9 disulfide bridges follow: C576–C599, C583–C597, C591–C602, C604–C614, C617–C620, C624–C669, C630–C649, C633–C645, and C677–C701. Residue N695 is glycosylated (N-linked (GlcNAc...) asparagine). The helical transmembrane segment at 709-729 (MIMLGVSLAILLIGVVLLCIW) threads the bilayer. The interaction with HAX1 stretch occupies residues 730–757 (KLLVSFHDRKEVAKFEAERSKAKWQTGT). Residues 730 to 787 (KLLVSFHDRKEVAKFEAERSKAKWQTGTNPLYRGSTSTFKNVTYKHREKHKVGLSSDG) are Cytoplasmic-facing.

This sequence belongs to the integrin beta chain family. As to quaternary structure, heterodimer of an alpha and a beta subunit. Interacts with FLNB. Interacts with HAX1. ITGAV:ITGB6 interacts with FBN1. ITGAV:ITGB6 interacts with TGFB1.

The protein resides in the cell membrane. The protein localises to the cell junction. It localises to the focal adhesion. Its function is as follows. Integrin alpha-V:beta-6 (ITGAV:ITGB6) is a receptor for fibronectin and cytotactin. It recognizes the sequence R-G-D in its ligands. ITGAV:ITGB6 acts as a receptor for fibrillin-1 (FBN1) and mediates R-G-D-dependent cell adhesion to FBN1. Integrin alpha-V:beta-6 (ITGAV:ITGB6) mediates R-G-D-dependent release of transforming growth factor beta-1 (TGF-beta-1) from regulatory Latency-associated peptide (LAP), thereby playing a key role in TGF-beta-1 activation. This is Integrin beta-6 (Itgb6) from Rattus norvegicus (Rat).